Reading from the N-terminus, the 266-residue chain is F-actin-capping protein subunit alpha (266 aa).

This sequence belongs to the F-actin-capping protein alpha subunit family. Heterodimer of an alpha and a beta subunit.

It is found in the cytoplasm. It localises to the cytoskeleton. F-actin-capping proteins bind in a Ca(2+)-independent manner to the fast growing ends of actin filaments (barbed end) thereby blocking the exchange of subunits at these ends. Unlike other capping proteins (such as gelsolin and severin), these proteins do not sever actin filaments. The protein is F-actin-capping protein subunit alpha (CAP1) of Debaryomyces hansenii (strain ATCC 36239 / CBS 767 / BCRC 21394 / JCM 1990 / NBRC 0083 / IGC 2968) (Yeast).